A 363-amino-acid chain; its full sequence is MSLQHFIQNALSNWMRQEGPESDIVLSSRIRLARNLDKVRFPTLFSNEEASAIIALFEEQFTGYEVPGIGKFELVKMDQVQPLEKRVLVEKHLISPHLTEASFGACLLSENEEVSIMLNEEDHIRIQCLFPGFQLSEALKAANQVDDWIEDRIDYAFSEQRGYLTSCPTNVGTGLRASVMMHLPALVLTRQINRIIPAINQLGLVVRGIYGEGSEALGNIFQISNQITLGKSEHDIVEDLNSVVAQLIEQERSARKALYQTSQIELEDRVYRSYGVLSNCRMIESKETARCLSDVRLGIDLGIIKGLSSNILNELMILTQPGFLQQYSGGALRPNERDIRRAALIRERLKLENNGNRQEDETI.

The 231-residue stretch at I24–A254 folds into the Phosphagen kinase C-terminal domain. ATP is bound by residues S27–R31, H92, R125, R176–M180, and R207–E212. Positions R337–A342 match the RDXXRA motif of the pArg binding pocket involved in allosteric regulation motif.

It belongs to the ATP:guanido phosphotransferase family.

It catalyses the reaction L-arginyl-[protein] + ATP = N(omega)-phospho-L-arginyl-[protein] + ADP + H(+). Appears to be allosterically activated by the binding of pArg-containing polypeptides to the pArg-binding pocket localized in the C-terminal domain of McsB. Catalyzes the specific phosphorylation of arginine residues in a large number of proteins. Is part of the bacterial stress response system. Protein arginine phosphorylation has a physiologically important role and is involved in the regulation of many critical cellular processes, such as protein homeostasis, motility, competence, and stringent and stress responses, by regulating gene expression and protein activity. The chain is Protein-arginine kinase from Bacillus licheniformis (strain ATCC 14580 / DSM 13 / JCM 2505 / CCUG 7422 / NBRC 12200 / NCIMB 9375 / NCTC 10341 / NRRL NRS-1264 / Gibson 46).